Here is an 862-residue protein sequence, read N- to C-terminus: Chaperone protein ClpB 1 (862 aa).

Residues 5–147 (AEQFTEQAWA…KEAITAVRGN (143 aa)) enclose the Clp R domain. 2 repeat regions span residues 8–72 (FTEQ…LQRL) and 84–147 (LGRS…VRGN). Residues 160–341 (ESLAKYGRDL…RRFQQVLVDQ (182 aa)) are NBD1. 207 to 214 (GEPGVGKT) contacts ATP. The interval 342–550 (PTVPDTISIL…IAEVIAKWTG (209 aa)) is linker. The stretch at 392 to 526 (IDLVDESAAR…QEDLLEDEDG (135 aa)) forms a coiled coil. Residues 560-771 (EMEKLLQLED…RLDDQIIFRS (212 aa)) form an NBD2 region. ATP is bound at residue 610–617 (GPTGVGKT). Positions 772 to 862 (LEKEELRRIV…DAGDDKLSIS (91 aa)) are C-terminal.

It belongs to the ClpA/ClpB family. In terms of assembly, homohexamer. The oligomerization is ATP-dependent.

It is found in the cytoplasm. Functionally, part of a stress-induced multi-chaperone system, it is involved in the recovery of the cell from heat-induced damage, in cooperation with DnaK, DnaJ and GrpE. Acts before DnaK, in the processing of protein aggregates. Protein binding stimulates the ATPase activity; ATP hydrolysis unfolds the denatured protein aggregates, which probably helps expose new hydrophobic binding sites on the surface of ClpB-bound aggregates, contributing to the solubilization and refolding of denatured protein aggregates by DnaK. In Parasynechococcus marenigrum (strain WH8102), this protein is Chaperone protein ClpB 1 (clpB1).